The primary structure comprises 1021 residues: Sodium/potassium-transporting ATPase subunit alpha-1 (1021 aa).

Positions 1–5 are excised as a propeptide; sequence MGKGA. Over residues 1 to 11 the composition is skewed to basic and acidic residues; it reads MGKGAGRDKYE. A disordered region spans residues 1–31; the sequence is MGKGAGRDKYEPTATSEHGTKKKKAKERDMD. The Cytoplasmic segment spans residues 6 to 85; it reads GRDKYEPTAT…NTLTPPPTTP (80 aa). Y10 carries the phosphotyrosine modification. S16 carries the post-translational modification Phosphoserine; by PKC. The tract at residues 80 to 82 is phosphoinositide-3 kinase binding; it reads PPP. A helical transmembrane segment spans residues 86-106; the sequence is EWVKFCRQLFGGFSLLLWIGS. Residues 107-129 lie on the Extracellular side of the membrane; the sequence is LLCFLAYGITSVMEGEPNSDNLY. Residues 130–150 traverse the membrane as a helical segment; sequence LGVVLAAVVIITGCFSYYQEA. Topologically, residues 151–286 are cytoplasmic; that stretch reads KSSKIMESFK…GGKTPIAMEI (136 aa). The tract at residues 214–233 is disordered; it reads SSLTGESEPQTRSPDFSNEN. The helical transmembrane segment at 287 to 306 threads the bilayer; that stretch reads EHFIHLITGVAVFLGVSFFI. Residues 307 to 318 are Extracellular-facing; the sequence is LSLILEYTWLEA. The chain crosses the membrane as a helical span at residues 319 to 336; that stretch reads VIFLIGIIVANVPEGLLA. The Cytoplasmic segment spans residues 337–770; sequence TVTVCLTLTA…EEGRLIFDNL (434 aa). The 4-aspartylphosphate intermediate role is filled by D374. ATP is bound at residue K485. Mg(2+) contacts are provided by D715 and D719. A helical transmembrane segment spans residues 771–790; it reads KKSIAYTLTSNIPEITPFLI. Over 791–800 the chain is Extracellular; the sequence is FIIANIPLPL. The helical transmembrane segment at 801 to 821 threads the bilayer; the sequence is GTCTILCIDLGTDMVPAISLA. Over 822-841 the chain is Cytoplasmic; it reads YEQAESDIMKRQPRNPKTDK. The helical transmembrane segment at 842–864 threads the bilayer; it reads LVNERLISMAYGQIGMIQALGGF. Residues 865-916 lie on the Extracellular side of the membrane; sequence FTYFVIMAENGFLPSGLVGIRLQWDDRWINDVEDSYGQQWTFEQRKIVEFTC. A helical membrane pass occupies residues 917–936; that stretch reads HTAFFVSIVVVQWADLIICK. Topologically, residues 937 to 949 are cytoplasmic; sequence TRRNSVFQQGMKN. At S941 the chain carries Phosphoserine; by PKA. The chain crosses the membrane as a helical span at residues 950–968; that stretch reads KILIFGLFEETALAAFLSY. The Extracellular segment spans residues 969–983; the sequence is CPGMDVALRMYPLKP. A helical membrane pass occupies residues 984–1004; sequence TWWFCAFPYSLLIFLYDEIRK. At 1005–1021 the chain is on the cytoplasmic side; sequence LIIRRNPGGWVERETYY.

This sequence belongs to the cation transport ATPase (P-type) (TC 3.A.3) family. Type IIC subfamily. The sodium/potassium-transporting ATPase is composed of a catalytic alpha subunit, an auxiliary non-catalytic beta subunit and an additional regulatory subunit. Phosphorylation on Tyr-10 modulates pumping activity.

The protein resides in the cell membrane. The protein localises to the sarcolemma. The catalysed reaction is K(+)(out) + Na(+)(in) + ATP + H2O = K(+)(in) + Na(+)(out) + ADP + phosphate + H(+). Its function is as follows. This is the catalytic component of the active enzyme, which catalyzes the hydrolysis of ATP coupled with the exchange of sodium and potassium ions across the plasma membrane. This action creates the electrochemical gradient of sodium and potassium ions, providing the energy for active transport of various nutrients. The sequence is that of Sodium/potassium-transporting ATPase subunit alpha-1 (ATP1A1) from Gallus gallus (Chicken).